Here is a 638-residue protein sequence, read N- to C-terminus: Guanylate-binding protein 7 (638 aa).

Residues 1–310 (MASGPNMEAP…DAINSGDVPC (310 aa)) form a GTPase domain (Globular) region. Positions 35–277 (TQPVVVVAIV…FCSYIFSNSK (243 aa)) constitute a GB1/RHD3-type G domain. GTP contacts are provided by residues 45 to 52 (GLYRTGKS), 67 to 69 (LGT), and 97 to 101 (DTEGL). The segment at 311–638 (LENAVTTLAQ…TQNSDKVRKL (328 aa)) is interaction with the CYBA-CYBB complex. A C-terminal tail; required for its localization to cytoplasmic vesicle region spans residues 590–638 (SSLGAKILDGFGDVLISVVPGSGKYFGLGLKILSSQMNQTQNSDKVRKL).

The protein belongs to the TRAFAC class dynamin-like GTPase superfamily. GB1/RHD3 GTPase family. GB1 subfamily. Monomer and dimer. Interacts with CYBA, CYBA-CYBB complex and ATG4B. Interacts (via GB1/RHD3-type G domain) with NCF2 and NCF2-NCF4 complex.

It is found in the cytoplasmic vesicle membrane. The enzyme catalyses GTP + H2O = GDP + phosphate + H(+). It catalyses the reaction GDP + H2O = GMP + phosphate + H(+). With respect to regulation, inhibited by orthovanadate, berylium fluoride and aluminum flouride. In terms of biological role, interferon (IFN)-inducible GTPase that plays important roles in innate immunity against a diverse range of bacterial, viral and protozoan pathogens. Hydrolyzes GTP to GMP in two consecutive cleavage reactions and predominantly uses GTP and not GDP or GMP as the substrate. Following infection, recruited to the pathogen-containing vacuoles or vacuole-escaped bacteria and acts as a positive regulator of inflammasome assembly by promoting the release of inflammasome ligands from bacteria. Acts by promoting lysis of pathogen-containing vacuoles, releasing pathogens into the cytosol. Following pathogen release in the cytosol, promotes recruitment of proteins that mediate bacterial cytolysis, such as Gm12250/Irgb10: this liberates ligands that are detected by inflammasomes, such as lipopolysaccharide (LPS) that activates the non-canonical CASP4/CASP11 inflammasome or double-stranded DNA (dsDNA) that activates the AIM2 inflammasome. Also promotes IFN-gamma-mediated host defense against bacterial infections by regulating oxidative responses and bacteriolytic peptide generation. May help to assemble NADPH oxidase on phagosomal membranes by acting as a bridging protein between NADPH oxidase cytosolic subunits NCF2-NCF4 and the membrane subunits CYBA-CYBB. Participates along with GBP1 in trafficking monoubiquinated protein cargo to autolysosomes for generating ubiquitin-derived antimicrobial peptides. Facilitates influenza A virus replication by inhibiting the activation of NF-kappaB and JAK-STAT signaling pathways and the expression of type I, type III interferons and pro-inflammatory cytokines. Confers protection to several pathogens, including the bacterial pathogens Listeria monocytogenes and Mycobacterium bovis BCG as well as the protozoan pathogen Toxoplasma gondii. Required for disruption of the parasitophorous vacuole formed following T.gondii infection and subsequent killing of the parasite. The polypeptide is Guanylate-binding protein 7 (Gbp7) (Mus musculus (Mouse)).